Here is a 206-residue protein sequence, read N- to C-terminus: Large ribosomal subunit protein uL4 (206 aa).

Positions 46–77 (GTRAQKDREQVKHSTKKPFKQKGTGNARAGMT) are disordered.

The protein belongs to the universal ribosomal protein uL4 family. As to quaternary structure, part of the 50S ribosomal subunit.

One of the primary rRNA binding proteins, this protein initially binds near the 5'-end of the 23S rRNA. It is important during the early stages of 50S assembly. It makes multiple contacts with different domains of the 23S rRNA in the assembled 50S subunit and ribosome. Functionally, forms part of the polypeptide exit tunnel. This Acidovorax ebreus (strain TPSY) (Diaphorobacter sp. (strain TPSY)) protein is Large ribosomal subunit protein uL4.